The chain runs to 69 residues: Guanine nucleotide-binding protein G(I)/G(S)/G(O) subunit gamma-T2 (69 aa).

Cys-66 bears the Cysteine methyl ester mark. The S-farnesyl cysteine moiety is linked to residue Cys-66. Positions 67–69 are cleaved as a propeptide — removed in mature form; the sequence is IIS.

Belongs to the G protein gamma family. G proteins are composed of 3 units, alpha, beta and gamma.

It is found in the cell membrane. In terms of biological role, guanine nucleotide-binding proteins (G proteins) are involved as a modulator or transducer in various transmembrane signaling systems. The beta and gamma chains are required for the GTPase activity, for replacement of GDP by GTP, and for G protein-effector interaction. The sequence is that of Guanine nucleotide-binding protein G(I)/G(S)/G(O) subunit gamma-T2 (GNGT2) from Bos taurus (Bovine).